The sequence spans 426 residues: Phosphomethylpyrimidine synthase (426 aa).

Substrate contacts are provided by residues N65, M94, Y123, H162, 184-186 (SRG), 225-228 (DGMR), and E264. H268 is a Zn(2+) binding site. Position 291 (Y291) interacts with substrate. Zn(2+) is bound at residue H332. The [4Fe-4S] cluster site is built by C408, C411, and C415.

The protein belongs to the ThiC family. The cofactor is [4Fe-4S] cluster.

The enzyme catalyses 5-amino-1-(5-phospho-beta-D-ribosyl)imidazole + S-adenosyl-L-methionine = 4-amino-2-methyl-5-(phosphooxymethyl)pyrimidine + CO + 5'-deoxyadenosine + formate + L-methionine + 3 H(+). It functions in the pathway cofactor biosynthesis; thiamine diphosphate biosynthesis. Functionally, catalyzes the synthesis of the hydroxymethylpyrimidine phosphate (HMP-P) moiety of thiamine from aminoimidazole ribotide (AIR) in a radical S-adenosyl-L-methionine (SAM)-dependent reaction. This is Phosphomethylpyrimidine synthase from Methanocaldococcus jannaschii (strain ATCC 43067 / DSM 2661 / JAL-1 / JCM 10045 / NBRC 100440) (Methanococcus jannaschii).